The chain runs to 584 residues: Breast carcinoma-amplified sequence 1 (584 aa).

3 disordered regions span residues 1–29 (MGNQMSVPQRVEDQENEPEAETYQDNASA), 59–280 (VATS…AAAI), and 297–377 (PNKA…GKLF). Composition is skewed to polar residues over residues 59 to 69 (VATSSPETTEI) and 112 to 128 (ADSSLGSVKLDVSSNKA). Serine 124 and serine 192 each carry phosphoserine. 3 stretches are compositionally biased toward basic and acidic residues: residues 186–226 (SKPK…KVDE), 238–252 (PAGKDIVDGKEKEGQ), and 300–311 (AETKKDPEDTGA). Serine 314 carries the post-translational modification Phosphoserine. Residues 314–354 (SPTTSADLKSDKANFTSQETQGAGKNSKGCNPSGHTQSVTT) are compositionally biased toward polar residues. The span at 357–366 (PAKEGTKEKS) shows a compositional bias: basic and acidic residues. Phosphoserine is present on residues serine 381 and serine 399. The segment at 415 to 584 (TVDLNEGDAA…VSIGPVGKSK (170 aa)) is disordered. Basic and acidic residues predominate over residues 428–439 (TEAKLKREESKP). Threonine 480 is subject to Phosphothreonine. Over residues 494-506 (KGKEGSSKDKKSA) the composition is skewed to basic and acidic residues. A compositionally biased stretch (polar residues) spans 525 to 540 (CTEQATVDTNSLQNGD). Residues 541 to 550 (KLQKRPEKRQ) are compositionally biased toward basic and acidic residues. Residue serine 552 is modified to Phosphoserine. The interval 565–584 (MLDAQVQTDPVSIGPVGKSK) is interacts with DYNLL1 and DYNLL2.

As to quaternary structure, homodimer. Interacts with DYNLL1 and DYNLL2. In terms of tissue distribution, highly expressed in the brain and, more specifically, in oligodendrocytes (at protein level). Expressed in the prostate, and at lower levels in testis, intestine and colon. Overexpressed in most breast cancer cell lines and down-regulated in some colorectal tumors.

Its subcellular location is the cytoplasm. Functionally, required for myelination. This is Breast carcinoma-amplified sequence 1 (BCAS1) from Homo sapiens (Human).